A 301-amino-acid chain; its full sequence is uncharacterized protein (301 aa).

The N-terminal stretch at Met1 to Ala28 is a signal peptide.

This is an uncharacterized protein from Treponema pallidum (strain Nichols).